The chain runs to 276 residues: MATSSSAFDDEFPMEEGMPELLDDEDVPSTLPSLLEQNMDTALKSNEFKLVKRKRRAGNAVDVVMEDISQPDDSTTDSPDADAEQKPTKRSKGSKGESRVVPVPKHRYTPLKDNWVNIFTPIVKNLGLQIRFNLKKRQVELRNPADREDTTDLQKATDFVRAFILGFEVNDAIALIRLDHLFLETFEIADVKHSLKGDHVSRAIGRIAGKDGRTKLVIENTTKTRIVVANTKIHILGAYQNLKLARNAVCSLILGSNPSKVYGNLRNMASRGAERL.

Disordered regions lie at residues methionine 1–threonine 30 and aspartate 62–valine 101. Over residues phenylalanine 8–valine 27 the composition is skewed to acidic residues. Residues glycine 197–valine 249 form the KH domain.

The protein belongs to the PNO1 family. Part of the small subunit (SSU) processome, composed of more than 70 proteins and the RNA chaperone small nucleolar RNA (snoRNA) U3.

It is found in the nucleus. It localises to the nucleolus. Part of the small subunit (SSU) processome, first precursor of the small eukaryotic ribosomal subunit. During the assembly of the SSU processome in the nucleolus, many ribosome biogenesis factors, an RNA chaperone and ribosomal proteins associate with the nascent pre-rRNA and work in concert to generate RNA folding, modifications, rearrangements and cleavage as well as targeted degradation of pre-ribosomal RNA by the RNA exosome. Positively regulates dimethylation of two adjacent adenosines in the loop of a conserved hairpin near the 3'-end of 18S rRNA. The chain is RNA-binding protein pno-1 from Caenorhabditis briggsae.